We begin with the raw amino-acid sequence, 343 residues long: 3-keto-steroid reductase (343 aa).

Residues Leu19 and Thr42 each coordinate NADP(+). Residues Ser180 and Tyr203 each act as proton donor in the active site. NADP(+)-binding residues include Tyr203, Lys207, and Ser239. The active-site Lowers pKa of active site Tyr is Lys207.

It belongs to the short-chain dehydrogenases/reductases (SDR) family. ERG27 subfamily.

It carries out the reaction a 3beta-hydroxysteroid + NADP(+) = a 3-oxosteroid + NADPH + H(+). The protein operates within steroid biosynthesis; zymosterol biosynthesis; zymosterol from lanosterol: step 5/6. Responsible for the reduction of the keto group on the C-3 of sterols. The protein is 3-keto-steroid reductase (ERG27) of Yarrowia lipolytica (strain CLIB 122 / E 150) (Yeast).